Here is a 168-residue protein sequence, read N- to C-terminus: tRNA-splicing endonuclease (168 aa).

Catalysis depends on residues Y107, H114, and K145.

This sequence belongs to the tRNA-intron endonuclease family. Archaeal short subfamily. As to quaternary structure, homotetramer; although the tetramer contains four active sites, only two participate in the cleavage. Therefore, it should be considered as a dimer of dimers.

The catalysed reaction is pretRNA = a 3'-half-tRNA molecule with a 5'-OH end + a 5'-half-tRNA molecule with a 2',3'-cyclic phosphate end + an intron with a 2',3'-cyclic phosphate and a 5'-hydroxyl terminus.. Endonuclease that removes tRNA introns. Cleaves pre-tRNA at the 5'- and 3'-splice sites to release the intron. The products are an intron and two tRNA half-molecules bearing 2',3' cyclic phosphate and 5'-OH termini. Recognizes a pseudosymmetric substrate in which 2 bulged loops of 3 bases are separated by a stem of 4 bp. In Thermococcus gammatolerans (strain DSM 15229 / JCM 11827 / EJ3), this protein is tRNA-splicing endonuclease.